Reading from the N-terminus, the 164-residue chain is MRSLDRYAIFILLACGLLWRPCLSSVPMPCCPIDSKKDVSGLPSVFEVKEIFFNYPQTCNYTNVAQFTYVPQGANVSTVVCANGFNLMSFILAVLQRVFEKPHNMGLLAENINKIRTDYALNFTAVNSESSRFNVVPVGRNGKVVTTTRVVKRSARSGSGAPPG.

Residues 1-24 form the signal peptide; that stretch reads MRSLDRYAIFILLACGLLWRPCLS.

It belongs to the herpesviridae glycoprotein L family. Interacts with glycoprotein H (gH); this interaction is necessary for the correct processing and cell surface expression of gH. The heterodimer gH/gL seems to interact with gB trimers during fusion.

It localises to the virion membrane. The protein resides in the host cell membrane. Its subcellular location is the host Golgi apparatus. The protein localises to the host trans-Golgi network. Its function is as follows. The heterodimer glycoprotein H-glycoprotein L is required for the fusion of viral and plasma membranes leading to virus entry into the host cell. Acts as a functional inhibitor of gH and maintains gH in an inhibited form. Upon binding to host integrins, gL dissociates from gH leading to activation of the viral fusion glycoproteins gB and gH. This chain is Envelope glycoprotein L, found in Equine herpesvirus 2 (strain 86/87) (EHV-2).